The following is a 101-amino-acid chain: Co-chaperonin GroES (101 aa).

Belongs to the GroES chaperonin family. As to quaternary structure, heptamer of 7 subunits arranged in a ring. Interacts with the chaperonin GroEL.

The protein localises to the cytoplasm. Functionally, together with the chaperonin GroEL, plays an essential role in assisting protein folding. The GroEL-GroES system forms a nano-cage that allows encapsulation of the non-native substrate proteins and provides a physical environment optimized to promote and accelerate protein folding. GroES binds to the apical surface of the GroEL ring, thereby capping the opening of the GroEL channel. This Thermus thermophilus (strain ATCC BAA-163 / DSM 7039 / HB27) protein is Co-chaperonin GroES.